The sequence spans 526 residues: Protein mono-ADP-ribosyltransferase PARP3 (526 aa).

Residues Met-1 to Pro-55 form a disordered region. One can recognise a WGR domain in the interval Asp-61–Tyr-151. The PARP alpha-helical domain occupies Pro-183–Ala-301. Residues His-312–Phe-526 enclose the PARP catalytic domain.

This sequence belongs to the ARTD/PARP family.

The protein resides in the nucleus. Its subcellular location is the chromosome. It is found in the cytoplasm. It localises to the cytoskeleton. The protein localises to the microtubule organizing center. The protein resides in the centrosome. Its subcellular location is the centriole. It catalyses the reaction L-aspartyl-[protein] + NAD(+) = 4-O-(ADP-D-ribosyl)-L-aspartyl-[protein] + nicotinamide. The enzyme catalyses L-glutamyl-[protein] + NAD(+) = 5-O-(ADP-D-ribosyl)-L-glutamyl-[protein] + nicotinamide. The catalysed reaction is L-lysyl-[protein] + NAD(+) = N(6)-(ADP-D-ribosyl)-L-lysyl-[protein] + nicotinamide + H(+). In terms of biological role, mono-ADP-ribosyltransferase that mediates mono-ADP-ribosylation of target proteins and plays a key role in the response to DNA damage. Mediates mono-ADP-ribosylation of glutamate, aspartate or lysine residues on target proteins. In contrast to PARP1 and PARP2, it is not able to mediate poly-ADP-ribosylation. Involved in DNA repair by mediating mono-ADP-ribosylation of a limited number of acceptor proteins involved in chromatin architecture and in DNA metabolism, such as histone H2B, XRCC5 and XRCC6. ADP-ribosylation follows DNA damage and appears as an obligatory step in a detection/signaling pathway leading to the reparation of DNA strand breaks. Involved in single-strand break repair by catalyzing mono-ADP-ribosylation of histone H2B on 'Glu-2' (H2BE2ADPr) of nucleosomes containing nicked DNA. Cooperates with the XRCC5-XRCC6 (Ku80-Ku70) heterodimer to limit end-resection thereby promoting accurate NHEJ. Associates with a number of DNA repair factors and is involved in the response to exogenous and endogenous DNA strand breaks. Together with APLF, promotes the retention of the LIG4-XRCC4 complex on chromatin and accelerate DNA ligation during non-homologous end-joining (NHEJ). In addition to proteins, also able to ADP-ribosylate DNA: mediates DNA mono-ADP-ribosylation of DNA strand break termini via covalent addition of a single ADP-ribose moiety to a 5'- or 3'-terminal phosphate residues in DNA containing multiple strand breaks. This is Protein mono-ADP-ribosyltransferase PARP3 from Gallus gallus (Chicken).